The chain runs to 163 residues: Low molecular weight protein-tyrosine phosphatase A (163 aa).

Cys-11 (nucleophile) is an active-site residue. Arg-17 is a catalytic residue. Asp-126 functions as the Proton donor in the catalytic mechanism.

It belongs to the low molecular weight phosphotyrosine protein phosphatase family.

It catalyses the reaction O-phospho-L-tyrosyl-[protein] + H2O = L-tyrosyl-[protein] + phosphate. Functionally, key virulence factor required for mycobacterial survival within host macrophages. Exhibits protein tyrosine phosphatase activity. In terms of biological role, supports mycobacteria survival during infection by modulation of the phagosome maturation and modulation of the normal host signaling pathways, including host innate immune responses and cell apoptosis. The polypeptide is Low molecular weight protein-tyrosine phosphatase A (ptpA) (Mycobacterium bovis (strain ATCC BAA-935 / AF2122/97)).